Reading from the N-terminus, the 500-residue chain is MTEHVQDENKLIAERRAKLEHIRTNCPANAHPNTWQRSHKAAELQAQYGEQTKEALEELAFQTSIAGRVMAKRGPFLVIQDVSGRIQAYAGKPVQGDLKERYQGLDIGDIIGVKGQLHLSGKGDLYVNMEEYQLLTKALRPLPEKFHGLTDQETRYRQRYVDLIVNEDSRNAFIMRSKVVAAIRNFMVKKEFMEVETPMMHVIPGGASARPFVTHHNALDMAMYLRIAPELYLKRLVVGGFERVFEINRNFRNEGLSPRHNPEFTMMEFYMAYADYKDLMDLTEEMLGSIAQELLGSTSMPYGEETVEFGGAYARLSMLEAIQKYNPDNATIQAMTYEQVKDVEFMRDLASSLGIKLEKFWTCGQLLEEIFGETAETKLMQPTFITGYPADISPLARRNDNNDFITDRFEFFIGGREVANGFSELNDAEDQDNRFKAQVDAKDAGDDEAMFYDADYITALEHGLPPTAGQGIGIDRLVMLFTNTHTIRDVILFPAMRPQA.

Residues E410 and E417 each coordinate Mg(2+).

It belongs to the class-II aminoacyl-tRNA synthetase family. In terms of assembly, homodimer. It depends on Mg(2+) as a cofactor.

The protein resides in the cytoplasm. It carries out the reaction tRNA(Lys) + L-lysine + ATP = L-lysyl-tRNA(Lys) + AMP + diphosphate. The chain is Lysine--tRNA ligase from Shewanella frigidimarina (strain NCIMB 400).